A 217-amino-acid polypeptide reads, in one-letter code: Probable transaldolase (217 aa).

Residue lysine 85 is the Schiff-base intermediate with substrate of the active site.

The protein belongs to the transaldolase family. Type 3B subfamily.

The protein resides in the cytoplasm. The catalysed reaction is D-sedoheptulose 7-phosphate + D-glyceraldehyde 3-phosphate = D-erythrose 4-phosphate + beta-D-fructose 6-phosphate. Its pathway is carbohydrate degradation; pentose phosphate pathway; D-glyceraldehyde 3-phosphate and beta-D-fructose 6-phosphate from D-ribose 5-phosphate and D-xylulose 5-phosphate (non-oxidative stage): step 2/3. Functionally, transaldolase is important for the balance of metabolites in the pentose-phosphate pathway. This is Probable transaldolase from Agathobacter rectalis (strain ATCC 33656 / DSM 3377 / JCM 17463 / KCTC 5835 / VPI 0990) (Eubacterium rectale).